The sequence spans 118 residues: Large ribosomal subunit protein uL18 (118 aa).

Positions 1–20 (MISKPDKNKKRQRRHARVRS) are disordered. Basic residues predominate over residues 7 to 20 (KNKKRQRRHARVRS).

It belongs to the universal ribosomal protein uL18 family. As to quaternary structure, part of the 50S ribosomal subunit; part of the 5S rRNA/L5/L18/L25 subcomplex. Contacts the 5S and 23S rRNAs.

Its function is as follows. This is one of the proteins that bind and probably mediate the attachment of the 5S RNA into the large ribosomal subunit, where it forms part of the central protuberance. This Pediococcus pentosaceus (strain ATCC 25745 / CCUG 21536 / LMG 10740 / 183-1w) protein is Large ribosomal subunit protein uL18.